The sequence spans 342 residues: Heat-inducible transcription repressor HrcA (342 aa).

This sequence belongs to the HrcA family.

Its function is as follows. Negative regulator of class I heat shock genes (grpE-dnaK-dnaJ and groELS operons). Prevents heat-shock induction of these operons. The protein is Heat-inducible transcription repressor HrcA of Mesoplasma florum (strain ATCC 33453 / NBRC 100688 / NCTC 11704 / L1) (Acholeplasma florum).